The following is a 106-amino-acid chain: COX assembly mitochondrial protein homolog (106 aa).

N-acetylalanine is present on Ala2. One can recognise a CHCH domain in the interval 28–71; the sequence is RERCSEQVQDFTKCCKDSGVLMVVKCRKENSALKDCLTSYYKDP. Short sequence motifs (cx9C motif) lie at residues 31–41 and 53–63; these read CSEQVQDFTKC and CRKENSALKDC. 2 disulfide bridges follow: Cys31-Cys63 and Cys41-Cys53.

Belongs to the CMC family. As to quaternary structure, component of the MITRAC (mitochondrial translation regulation assembly intermediate of cytochrome c oxidase complex) complex, the core components of this complex being COA3/MITRAC12 and COX14.

Its subcellular location is the mitochondrion. In terms of biological role, component of the MITRAC (mitochondrial translation regulation assembly intermediate of cytochrome c oxidase complex) complex, that regulates cytochrome c oxidase assembly. The polypeptide is COX assembly mitochondrial protein homolog (CMC1) (Bos taurus (Bovine)).